We begin with the raw amino-acid sequence, 112 residues long: Ribonuclease VapC8 (112 aa).

Residues 10 to 109 enclose the PINc domain; sequence LLDTSVFIAR…TDALIAATAE (100 aa). Mg(2+) contacts are provided by Asp12 and Asp101.

Belongs to the PINc/VapC protein family. Mg(2+) serves as cofactor.

In terms of biological role, toxic component of a type II toxin-antitoxin (TA) system. An RNase. The cognate antitoxin is VapB8. This is Ribonuclease VapC8 (vapC8) from Mycobacterium tuberculosis (strain CDC 1551 / Oshkosh).